The following is a 286-amino-acid chain: ATP synthase gamma chain (286 aa).

It belongs to the ATPase gamma chain family. In terms of assembly, F-type ATPases have 2 components, CF(1) - the catalytic core - and CF(0) - the membrane proton channel. CF(1) has five subunits: alpha(3), beta(3), gamma(1), delta(1), epsilon(1). CF(0) has three main subunits: a, b and c.

It is found in the cell inner membrane. Produces ATP from ADP in the presence of a proton gradient across the membrane. The gamma chain is believed to be important in regulating ATPase activity and the flow of protons through the CF(0) complex. The chain is ATP synthase gamma chain from Shewanella halifaxensis (strain HAW-EB4).